A 640-amino-acid chain; its full sequence is MKIKVVLPDGSEREYEKGTKPMEIAREVGIKKVIGAVVDEELWDLKRPLERDCRIRFVTLEDPEAPEFYRHTMAHILAQAVMRLYGKENVKLGIGPTIENGFYYDFDIRNGKLTEEDLPRIEQEMKKIIKENLPIEREEISKDEAKEIFKDQPYKLELIEEIEGDTVTIYRQGEFVDLCRGPHLPSTGVVKHFKLLSVSGAYWRGSEKNPMLTRVYGTAFAKKEDLENYLKFLEEAQKRDHRKLGPQLELFMLNTDYAPGMPFFLPRGVIVLNELMNFSRELHRERGYQEIFTPLIMNEQLWRISGHWDHYAENMYFIEKGEERYAVKPMNCPGHILVYKSRAVSYRDLPLRFFEFGRVHRYERSGVLHGLMRVRSFTQDDAHIFCTPDQIEDEILGVLELINTIYSQFGFTYRVELSTMPEDHMGDEAIWEKATNALKKALDRAGLPYRVNEGEGAFYGPKIDFHIKDSLGREWQCATIQLDFMMPEKFNVTYIGPDNREHTAVMIHRAIYGSLERFFGILIEHFAGAFPTWIAPVQVAVIPISDKHSEGAKKVATMLSREGFRVFLDDRRETLGYRIRQAQIQKIPYMVVLGDRELESGKLSVRTRSGKEIKDVEMDHFIDTLKKEVRDRKLELTLEG.

One can recognise a TGS domain in the interval 1–59; the sequence is MKIKVVLPDGSEREYEKGTKPMEIAREVGIKKVIGAVVDEELWDLKRPLERDCRIRFVT. Positions 240–531 are catalytic; it reads DHRKLGPQLE…LIEHFAGAFP (292 aa). C332, H383, and H508 together coordinate Zn(2+).

Belongs to the class-II aminoacyl-tRNA synthetase family. Homodimer. It depends on Zn(2+) as a cofactor.

It localises to the cytoplasm. It carries out the reaction tRNA(Thr) + L-threonine + ATP = L-threonyl-tRNA(Thr) + AMP + diphosphate + H(+). Its function is as follows. Catalyzes the attachment of threonine to tRNA(Thr) in a two-step reaction: L-threonine is first activated by ATP to form Thr-AMP and then transferred to the acceptor end of tRNA(Thr). Also edits incorrectly charged L-seryl-tRNA(Thr). This chain is Threonine--tRNA ligase, found in Thermotoga neapolitana (strain ATCC 49049 / DSM 4359 / NBRC 107923 / NS-E).